A 110-amino-acid chain; its full sequence is Large ribosomal subunit protein uL22 (110 aa).

Belongs to the universal ribosomal protein uL22 family. Part of the 50S ribosomal subunit.

Its function is as follows. This protein binds specifically to 23S rRNA; its binding is stimulated by other ribosomal proteins, e.g. L4, L17, and L20. It is important during the early stages of 50S assembly. It makes multiple contacts with different domains of the 23S rRNA in the assembled 50S subunit and ribosome. The globular domain of the protein is located near the polypeptide exit tunnel on the outside of the subunit, while an extended beta-hairpin is found that lines the wall of the exit tunnel in the center of the 70S ribosome. This chain is Large ribosomal subunit protein uL22, found in Hydrogenovibrio crunogenus (strain DSM 25203 / XCL-2) (Thiomicrospira crunogena).